Reading from the N-terminus, the 238-residue chain is Octanoyltransferase (238 aa).

Residues 40 to 220 (AGGSDALLLL…RVCDALDGRL (181 aa)) enclose the BPL/LPL catalytic domain. Substrate is bound by residues 78 to 85 (RGGKITWH), 150 to 152 (AIG), and 163 to 165 (GFA). Residue Cys181 is the Acyl-thioester intermediate of the active site.

Belongs to the LipB family.

It is found in the cytoplasm. It carries out the reaction octanoyl-[ACP] + L-lysyl-[protein] = N(6)-octanoyl-L-lysyl-[protein] + holo-[ACP] + H(+). The protein operates within protein modification; protein lipoylation via endogenous pathway; protein N(6)-(lipoyl)lysine from octanoyl-[acyl-carrier-protein]: step 1/2. In terms of biological role, catalyzes the transfer of endogenously produced octanoic acid from octanoyl-acyl-carrier-protein onto the lipoyl domains of lipoate-dependent enzymes. Lipoyl-ACP can also act as a substrate although octanoyl-ACP is likely to be the physiological substrate. This is Octanoyltransferase from Mycobacterium sp. (strain JLS).